Reading from the N-terminus, the 169-residue chain is Protein FAM106A (169 aa).

The protein belongs to the FAM106 family.

The chain is Protein FAM106A (FAM106A) from Homo sapiens (Human).